The primary structure comprises 451 residues: uncharacterized protein (451 aa).

The region spanning 2–60 is the TRAM domain; that stretch reads NVVLKQRIPLKIKRMGINGEGIGFYKKTLIFVPGALKGEEVFCQISSVRRNFAEAKLLK. Residues Cys-73, Cys-79, Cys-82, and Cys-162 each coordinate [4Fe-4S] cluster. The S-adenosyl-L-methionine site is built by Gln-283, Tyr-312, Asp-333, and Asp-381. Cys-408 (nucleophile) is an active-site residue.

This sequence belongs to the class I-like SAM-binding methyltransferase superfamily. RNA M5U methyltransferase family.

This is an uncharacterized protein from Streptococcus agalactiae serotype III (strain NEM316).